A 434-amino-acid chain; its full sequence is Mannose-6-phosphate isomerase (434 aa).

Residues Q109, H111, and E136 each contribute to the Zn(2+) site. Polar residues predominate over residues 181–191 (SLGLPTSQPPD). The interval 181–200 (SLGLPTSQPPDTSLFKPTES) is disordered. Residue H291 participates in Zn(2+) binding. Residue R310 is part of the active site.

The protein belongs to the mannose-6-phosphate isomerase type 1 family. Requires Zn(2+) as cofactor.

Its subcellular location is the cytoplasm. It catalyses the reaction D-mannose 6-phosphate = D-fructose 6-phosphate. It functions in the pathway nucleotide-sugar biosynthesis; GDP-alpha-D-mannose biosynthesis; alpha-D-mannose 1-phosphate from D-fructose 6-phosphate: step 1/2. Its function is as follows. Involved in the synthesis of the GDP-mannose and dolichol-phosphate-mannose required for a number of critical mannosyl transfer reactions. The protein is Mannose-6-phosphate isomerase (MAN1) of Cryptococcus neoformans var. neoformans serotype D (strain JEC21 / ATCC MYA-565) (Filobasidiella neoformans).